A 352-amino-acid polypeptide reads, in one-letter code: Phenylalanine--tRNA ligase alpha subunit (352 aa).

Glutamate 258 contributes to the Mg(2+) binding site.

Belongs to the class-II aminoacyl-tRNA synthetase family. Phe-tRNA synthetase alpha subunit type 1 subfamily. Tetramer of two alpha and two beta subunits. Mg(2+) serves as cofactor.

The protein localises to the cytoplasm. The catalysed reaction is tRNA(Phe) + L-phenylalanine + ATP = L-phenylalanyl-tRNA(Phe) + AMP + diphosphate + H(+). In Staphylococcus aureus (strain bovine RF122 / ET3-1), this protein is Phenylalanine--tRNA ligase alpha subunit.